The following is a 307-amino-acid chain: Zinc transporter ZIP9 (307 aa).

Residues 4 to 24 (FISISLLSLAMLVGCYVAGII) form a helical membrane-spanning segment. The N-linked (GlcNAc...) asparagine glycan is linked to Asn29. 5 helical membrane passes run 35–55 (LKLVTVLGAGLLCGTALAVIV), 106–126 (AYIGVSLVLGFVFMLLVDQIG), 146–166 (ITTTLGLVVHAAADGVALGAA), 176–196 (LIVFVAIMLHKAPAAFGLVSF), and 210–230 (HLLVFALAAPVMSMVTYLGLS). An N-linked (GlcNAc...) asparagine glycan is attached at Asn241. The next 2 membrane-spanning stretches (helical) occupy residues 244 to 264 (GVAMLFSAGTFLYVATVHVLP) and 286 to 306 (LEVAALVLGCLIPLILSVGHQ).

It belongs to the ZIP transporter (TC 2.A.5) family. Highly expressed in pancreas, testis, and pituitary and moderately in the kidney, liver, uterus, heart, prostate, and brain, whereas expression is lower in the ovary and colon.

The protein resides in the golgi apparatus. It is found in the trans-Golgi network membrane. It localises to the cell membrane. Its subcellular location is the cytoplasm. The protein localises to the perinuclear region. The protein resides in the mitochondrion. It is found in the nucleus. It carries out the reaction Zn(2+)(in) = Zn(2+)(out). Functionally, transports zinc ions across cell and organelle membranes into the cytoplasm and regulates intracellular zinc homeostasis. Participates in the zinc ions efflux out of the secretory compartments. Regulates intracellular zinc level, resulting in the enhancement of AKT1 and MAPK3/MAPK1 (Erk1/2) phosphorylation in response to the BCR activation. Also functions as a membrane androgen receptor that mediates, through a G protein, the non-classical androgen signaling pathway, characterized by the activation of MAPK3/MAPK1 (Erk1/2) and transcription factors CREB1 or ATF1. This pathway contributes to CLDN1 and CLDN5 expression and tight junction formation between adjacent Sertoli cells. Mediates androgen-induced vascular endothelial cell proliferation through activation of an inhibitory G protein leading to the AKT1 and MAPK3/MAPK1 (Erk1/2) activation which in turn modulate inhibition (phosphorylation) of GSK3B and CCND1 transcription. Moreover, has dual functions as a membrane-bound androgen receptor and as an androgen-dependent zinc transporter both of which are mediated through an inhibitory G protein (Gi) that mediates both MAP kinase and zinc signaling leading to the androgen-dependent apoptotic process. The chain is Zinc transporter ZIP9 from Homo sapiens (Human).